The sequence spans 273 residues: 4-hydroxy-tetrahydrodipicolinate reductase (273 aa).

Residues 12-17 and Glu-38 contribute to the NAD(+) site; that span reads GAGGRM. NADP(+) is bound at residue Arg-39. NAD(+) contacts are provided by residues 102–104 and 126–129; these read GTT and AANF. The active-site Proton donor/acceptor is His-159. Residue His-160 coordinates (S)-2,3,4,5-tetrahydrodipicolinate. The active-site Proton donor is Lys-163. Residue 169-170 participates in (S)-2,3,4,5-tetrahydrodipicolinate binding; that stretch reads GT.

The protein belongs to the DapB family. Homotetramer.

The protein resides in the cytoplasm. It carries out the reaction (S)-2,3,4,5-tetrahydrodipicolinate + NAD(+) + H2O = (2S,4S)-4-hydroxy-2,3,4,5-tetrahydrodipicolinate + NADH + H(+). The enzyme catalyses (S)-2,3,4,5-tetrahydrodipicolinate + NADP(+) + H2O = (2S,4S)-4-hydroxy-2,3,4,5-tetrahydrodipicolinate + NADPH + H(+). It participates in amino-acid biosynthesis; L-lysine biosynthesis via DAP pathway; (S)-tetrahydrodipicolinate from L-aspartate: step 4/4. Functionally, catalyzes the conversion of 4-hydroxy-tetrahydrodipicolinate (HTPA) to tetrahydrodipicolinate. This chain is 4-hydroxy-tetrahydrodipicolinate reductase, found in Proteus mirabilis (strain HI4320).